A 154-amino-acid chain; its full sequence is Cytochrome c-type biogenesis protein CcmE (154 aa).

Residues 1-8 lie on the Cytoplasmic side of the membrane; the sequence is MTPQRKRR. The chain crosses the membrane as a helical; Signal-anchor for type II membrane protein span at residues 9 to 29; it reads LVMLAALAGGVGVAVALALAA. At 30 to 154 the chain is on the periplasmic side; it reads LQQNINLFYS…GGTPAAEPQP (125 aa). Heme is bound by residues histidine 124 and tyrosine 128. The segment at 130-154 is disordered; that stretch reads PPEAAHALKQGAATSGGTPAAEPQP.

Belongs to the CcmE/CycJ family.

It is found in the cell inner membrane. Its function is as follows. Heme chaperone required for the biogenesis of c-type cytochromes. Transiently binds heme delivered by CcmC and transfers the heme to apo-cytochromes in a process facilitated by CcmF and CcmH. The protein is Cytochrome c-type biogenesis protein CcmE of Bordetella petrii (strain ATCC BAA-461 / DSM 12804 / CCUG 43448).